The following is an 835-amino-acid chain: Prickle-like protein 1-A (835 aa).

In terms of domain architecture, PET spans 14–122 (FGCQRSSTSD…NIKMLSRAVM (109 aa)). 3 LIM zinc-binding domains span residues 124-188 (ATCE…ELLK), 189-249 (PRCS…HYAE), and 250-313 (YCES…EDVH). Disordered regions lie at residues 312-346 (VHAS…ADQC), 426-455 (LFQQ…QRNN), 603-706 (CQEK…RKRS), and 769-835 (CSSS…CIIS). 3 stretches are compositionally biased toward basic and acidic residues: residues 432-453 (EDNR…DLQR), 603-614 (CQEKPPPEEKPM), and 646-655 (EIRRPPMSER). Composition is skewed to basic residues over residues 669 to 683 (RPHH…KSRK) and 819 to 835 (SKSK…CIIS). Cys-832 carries the cysteine methyl ester modification. Cys-832 carries the S-farnesyl cysteine lipid modification. Residues 833-835 (IIS) constitute a propeptide, removed in mature form.

Belongs to the prickle / espinas / testin family. As to quaternary structure, interacts with dvl2/dsh and mapk8/jnk1. Expressed in the dorsal marginal zone of early gastrulae (stage 10). As gastrulation proceeds, expression expands to include the lateral and ventral marginal zones, excluding the few rows of cells above the blastopore lip. Expression moves dorsally with gastrulation cell movements, and by the end of gastrulation expression is seen in dorsal mesoderm and posterior but not anterior neural ectoderm. Expression becomes down-regulated in mesoderm but remains strong in posterior ectoderm through the neurula stages. During tailbud stages, expressed in the pronephric duct, tailbud, tailtip and forming somites. In the most posterior regions, expressed in notochord and in the floorplate of the neural tube with weak expression in the roofplate. At stage 30, expressed in a complex pattern in the head including strong expression in the lens and otic vesicle.

Its subcellular location is the cell membrane. Functionally, acts in a planar cell polarity (PCP) complex; polarization along the apical/basal axis of epithelial cells. Regulates the polarized assembly of fibronectrin on the surface of the mesoderm during gastrulation. Essential for gastrulation cell movements, cooperating with dvl2/dsh to activate jnk. Acts together with tes to control axial elongation. This is Prickle-like protein 1-A (prickle1-a) from Xenopus laevis (African clawed frog).